Consider the following 231-residue polypeptide: Ion-translocating oxidoreductase complex subunit E (231 aa).

6 consecutive transmembrane segments (helical) span residues 18 to 38, 39 to 59, 63 to 83, 86 to 106, 125 to 145, and 182 to 202; these read ALVQLLGLCPLLAVTSTATNA, LGLGLATTLVLTLTNLTISTL, TPAEIRIPIYVMIIASVVSAV, LINAYAFGLYQSLGIFIPLIV, ALSALDGFSIGMGATCAMFVL, and PFLLAMLPPGAFIGLGLMLAG.

It belongs to the NqrDE/RnfAE family. In terms of assembly, the complex is composed of six subunits: RsxA, RsxB, RsxC, RsxD, RsxE and RsxG.

Its subcellular location is the cell inner membrane. Part of a membrane-bound complex that couples electron transfer with translocation of ions across the membrane. Required to maintain the reduced state of SoxR. The polypeptide is Ion-translocating oxidoreductase complex subunit E (Escherichia coli O6:H1 (strain CFT073 / ATCC 700928 / UPEC)).